The primary structure comprises 805 residues: Leucine--tRNA ligase (805 aa).

Residues 40–51 carry the 'HIGH' region motif; sequence PYPSGQGLHVGH. The 'KMSKS' region signature appears at 577–581; sequence KMSKS. Lysine 580 lines the ATP pocket.

It belongs to the class-I aminoacyl-tRNA synthetase family.

The protein resides in the cytoplasm. The catalysed reaction is tRNA(Leu) + L-leucine + ATP = L-leucyl-tRNA(Leu) + AMP + diphosphate. In Pediococcus pentosaceus (strain ATCC 25745 / CCUG 21536 / LMG 10740 / 183-1w), this protein is Leucine--tRNA ligase.